We begin with the raw amino-acid sequence, 1309 residues long: Putative receptor-type tyrosine-protein phosphatase mosPTP-1 (1309 aa).

Residues methionine 1–alanine 36 form the signal peptide. The Extracellular segment spans residues alanine 37–alanine 572. N-linked (GlcNAc...) asparagine glycans are attached at residues asparagine 60, asparagine 107, asparagine 162, asparagine 257, asparagine 353, asparagine 389, asparagine 455, asparagine 501, and asparagine 513. Fibronectin type-III domains are found at residues proline 147 to glutamate 244, lysine 249 to valine 347, lysine 350 to serine 449, and alanine 450 to histidine 553. The helical transmembrane segment at valine 573–leucine 593 threads the bilayer. Residues tryptophan 594–serine 1309 are Cytoplasmic-facing. Tyrosine-protein phosphatase domains are found at residues phenylalanine 656–alanine 921 and isoleucine 944–methionine 1196. The active-site Phosphocysteine intermediate is the cysteine 862. Positions asparagine 1239–threonine 1269 are disordered. Gly residues predominate over residues glycine 1256 to threonine 1268.

The protein belongs to the protein-tyrosine phosphatase family. Receptor class subfamily. In terms of assembly, interacts with C-type lectin mosGCTL-1; the interaction probably mediates the recruitment of West Nile virus particles in complex with C-type lectin mosGCTL-1 to the cell surface. Interacts with C-type lectin mosGCTL-7; the interaction probably mediates the recruitment of Japanese encephalitis virus particles in complex with C-type lectin mosGCTL-7 to the cell surface. In terms of tissue distribution, salivary gland (at protein level). Hemolymph. Low-level expression in midgut.

The protein resides in the cell membrane. The enzyme catalyses O-phospho-L-tyrosyl-[protein] + H2O = L-tyrosyl-[protein] + phosphate. In terms of biological role, putative protein tyrosine-protein phosphatase. Functionally, (Microbial infection) Facilitates West Nile virus infection in mosquitoes probably via recruiting West Nile virus particles in complex with C-type lectin mosGCTL-1 to the cell surface. Its function is as follows. (Microbial infection) Facilitates Japanese encephalitis virus infection in mosquitoes probably via recruiting Japanese encephalitis virus particles in complex with C-type lectin mosGCTL-7 to the cell surface. The polypeptide is Putative receptor-type tyrosine-protein phosphatase mosPTP-1 (Aedes aegypti (Yellowfever mosquito)).